Reading from the N-terminus, the 1400-residue chain is DNA-directed RNA polymerase subunit beta' (1400 aa).

Zn(2+) is bound by residues Cys-70, Cys-72, Cys-85, and Cys-88. Residues Asp-460, Asp-462, and Asp-464 each contribute to the Mg(2+) site. The Zn(2+) site is built by Cys-814, Cys-887, Cys-894, and Cys-897.

This sequence belongs to the RNA polymerase beta' chain family. In terms of assembly, the RNAP catalytic core consists of 2 alpha, 1 beta, 1 beta' and 1 omega subunit. When a sigma factor is associated with the core the holoenzyme is formed, which can initiate transcription. Mg(2+) serves as cofactor. The cofactor is Zn(2+).

The catalysed reaction is RNA(n) + a ribonucleoside 5'-triphosphate = RNA(n+1) + diphosphate. Functionally, DNA-dependent RNA polymerase catalyzes the transcription of DNA into RNA using the four ribonucleoside triphosphates as substrates. The chain is DNA-directed RNA polymerase subunit beta' from Marinomonas sp. (strain MWYL1).